The following is a 306-amino-acid chain: MAASLHIILDTDPGIDDAAAIAAALFAPELDLQLMTTVAGNVSVEKTTRNGLQLLHFWDADVPLAQGAATPLLRPLRDAAYVHGESGMEGYDFVDHQRQPLAKPAFIAIRDVLMNAPEPMTLVAIGPLTNIALLLMHYPECRFNIHRLVIMGGSAGRGNFTPNAEFNIAVDPEAAAHVFRSGIEIVMCGLDVTNQAVLTPEYLATLPALNKTGGMLHALFSHYRSGSMQSGLRMHDLCAIAWLVRPELFTLQSCFVAVETQGQYTAGTTVVDIEGRLGQPANAQVALALDVDGFRQWVAEVFACAP.

His235 is an active-site residue.

Belongs to the IUNH family. RihC subfamily.

In terms of biological role, hydrolyzes both purine and pyrimidine ribonucleosides with a broad-substrate specificity. In Salmonella schwarzengrund (strain CVM19633), this protein is Non-specific ribonucleoside hydrolase RihC.